A 126-amino-acid chain; its full sequence is uncharacterized protein (126 aa).

This is an uncharacterized protein from Archaeoglobus fulgidus (strain ATCC 49558 / DSM 4304 / JCM 9628 / NBRC 100126 / VC-16).